Reading from the N-terminus, the 233-residue chain is Phosphoglycolate phosphatase 2 (233 aa).

The active-site Nucleophile is aspartate 13. 2 residues coordinate Mg(2+): aspartate 13 and aspartate 15. Residue lysine 152 coordinates substrate. The Mg(2+) site is built by aspartate 174 and aspartate 178.

This sequence belongs to the archaeal SPP-like hydrolase family. Requires Mg(2+) as cofactor.

The enzyme catalyses 2-phosphoglycolate + H2O = glycolate + phosphate. Its function is as follows. Catalyzes the dephosphorylation of 2-phosphoglycolate. This chain is Phosphoglycolate phosphatase 2, found in Saccharolobus solfataricus (strain ATCC 35092 / DSM 1617 / JCM 11322 / P2) (Sulfolobus solfataricus).